A 411-amino-acid chain; its full sequence is ATP-dependent RNA helicase eIF4A (411 aa).

Residues 1–23 are disordered; the sequence is MSKPEDTSAAAAAPAGEAGNNLN. A compositionally biased stretch (low complexity) spans 9 to 19; that stretch reads AAAAAPAGEAG. The Q motif motif lies at 38–66; the sequence is DNFDNMELKEELLRGVYAYGFERPSAIQA. The region spanning 69-239 is the Helicase ATP-binding domain; it reads IVPVIKGHDV…KKFMRDPIRI (171 aa). 82–89 lines the ATP pocket; the sequence is AQSGTGKT. Positions 187–190 match the DEAD box motif; that stretch reads DEAD. Residues 250 to 411 enclose the Helicase C-terminal domain; that stretch reads GIKQFYVAVE…EMPLNVADLI (162 aa).

Belongs to the DEAD box helicase family. eIF4A subfamily. In terms of assembly, component of the eIF4F complex, which composition varies with external and internal environmental conditions. It is composed of at least eIF4A, eIF4E and eIF4G.

The protein localises to the cytoplasm. It carries out the reaction ATP + H2O = ADP + phosphate + H(+). In terms of biological role, ATP-dependent RNA helicase which is a subunit of the eIF4F complex involved in cap recognition and is required for mRNA binding to ribosome. In the current model of translation initiation, eIF4A unwinds RNA secondary structures in the 5'-UTR of mRNAs which is necessary to allow efficient binding of the small ribosomal subunit, and subsequent scanning for the initiator codon. This is ATP-dependent RNA helicase eIF4A (TIF1) from Mycosarcoma maydis (Corn smut fungus).